Reading from the N-terminus, the 440-residue chain is G-protein coupled receptor family C group 5 member C (440 aa).

Residues 1–22 form the signal peptide; it reads MATHRTLLMCLGLPLFFPGALA. Over 23–49 the chain is Extracellular; the sequence is QNHAPPGCSPDLDPLYYNLCDRSGAWG. A helical membrane pass occupies residues 50-70; sequence IVSEAVAGAGIITTFVLTIIL. Over 71 to 84 the chain is Cytoplasmic; it reads VASLPFVQDTKKRS. A helical membrane pass occupies residues 85–105; that stretch reads LLGTQVFFLLGTLGLFCLVFA. The Extracellular portion of the chain corresponds to 106–119; sequence CVVKPDFSTCASRR. A helical transmembrane segment spans residues 120–140; sequence FLFGVLFAICFSCLVAHVLSL. Residues 141-155 are Cytoplasmic-facing; sequence NFLTRKNHGPRGWVI. A helical membrane pass occupies residues 156–176; the sequence is FTVALLLTLVEVIINTEWLII. Residues 177–207 lie on the Extracellular side of the membrane; the sequence is TLVRGGGQVSPLGNVSADSTMTSPCAIANMD. N-linked (GlcNAc...) asparagine glycosylation is present at N190. Residues 208-228 form a helical membrane-spanning segment; sequence FVMALIYVMLLLLTAFLGAWP. At 229–240 the chain is on the cytoplasmic side; that stretch reads TLCGRFKRWRKH. The chain crosses the membrane as a helical span at residues 241–261; it reads GVFVLLTTVISIAIWVVWIVM. The Extracellular segment spans residues 262–278; sequence YTYGNEQHHSPTWDDPT. A helical membrane pass occupies residues 279 to 299; the sequence is LAIALAANAWTFVLFYVIPEV. Residues 300 to 440 lie on the Cytoplasmic side of the membrane; that stretch reads SQVTKPSPEQ…QVFRNPYVWD (141 aa). A phosphoserine mark is found at S343, S382, S402, and S405. Y413 is subject to Phosphotyrosine. T422 bears the Phosphothreonine mark.

The protein belongs to the G-protein coupled receptor 3 family.

It is found in the cell membrane. Functionally, this retinoic acid-inducible G-protein coupled receptor provide evidence for a possible interaction between retinoid and G-protein signaling pathways. The polypeptide is G-protein coupled receptor family C group 5 member C (Gprc5c) (Mus musculus (Mouse)).